A 306-amino-acid polypeptide reads, in one-letter code: Shugoshin (306 aa).

Residues Asn-28–Thr-75 adopt a coiled-coil conformation. Disordered stretches follow at residues Pro-122–Ser-196 and Ile-223–Phe-306. The span at Pro-133–Ser-161 shows a compositional bias: basic and acidic residues. Residues Asn-167–Asn-181 show a composition bias toward polar residues. Over residues Gly-230 to Ala-241 the composition is skewed to pro residues.

This sequence belongs to the shugoshin family.

The protein localises to the nucleus. Its subcellular location is the chromosome. It is found in the centromere. Its function is as follows. Plays a central role in chromosome cohesion during cell division by preventing premature dissociation of cohesin complex from centromeres after prophase, when most of cohesin complex dissociates from chromosomes arms. In Caenorhabditis briggsae, this protein is Shugoshin (sgo-1).